The primary structure comprises 314 residues: MSKVKVAIIGSGNIGTDLMIKVLRNSDYLEMGAMVGIDPASDGLARAARLNVPITAEGVEGLIGLPNFDEIEIVFDATSAKAHVANNARLAPLGKRMIDLTPAAIGPYVVPAVNADEHLDAPNVNMVTCGGQATIPMVAAVSRVVPVAYAEIVASIASKSAGPGTRANIDEFTETTSEAIVAVGGARRGKAIIILNPAEPPLIMRDTVFCLVDAPDPAVHEEIRQSIEKMVGDVSAYVPGYRLKQEVQITEIPADQPVETLLVDGNRPTHQVSVFLEVEGAAHYLPAYAGNLDIMTSAGMQIAERIAQQKEATK.

An NAD(+)-binding site is contributed by 11 to 14 (SGNI). The active-site Acyl-thioester intermediate is the C129. NAD(+)-binding positions include 160-168 (SAGPGTRAN) and N291.

The protein belongs to the acetaldehyde dehydrogenase family.

The catalysed reaction is acetaldehyde + NAD(+) + CoA = acetyl-CoA + NADH + H(+). The polypeptide is Acetaldehyde dehydrogenase 2 (Rhodococcus erythropolis (strain PR4 / NBRC 100887)).